The primary structure comprises 252 residues: 2-succinyl-6-hydroxy-2,4-cyclohexadiene-1-carboxylate synthase (252 aa).

The protein belongs to the AB hydrolase superfamily. MenH family. Monomer.

It carries out the reaction 5-enolpyruvoyl-6-hydroxy-2-succinyl-cyclohex-3-ene-1-carboxylate = (1R,6R)-6-hydroxy-2-succinyl-cyclohexa-2,4-diene-1-carboxylate + pyruvate. Its pathway is quinol/quinone metabolism; 1,4-dihydroxy-2-naphthoate biosynthesis; 1,4-dihydroxy-2-naphthoate from chorismate: step 3/7. It functions in the pathway quinol/quinone metabolism; menaquinone biosynthesis. Catalyzes a proton abstraction reaction that results in 2,5-elimination of pyruvate from 2-succinyl-5-enolpyruvyl-6-hydroxy-3-cyclohexene-1-carboxylate (SEPHCHC) and the formation of 2-succinyl-6-hydroxy-2,4-cyclohexadiene-1-carboxylate (SHCHC). The chain is 2-succinyl-6-hydroxy-2,4-cyclohexadiene-1-carboxylate synthase from Shigella flexneri serotype 5b (strain 8401).